Reading from the N-terminus, the 292-residue chain is HTH-type transcriptional regulator BlaA (292 aa).

Positions 5–62 (LPLNALRAFEASARHLNFTKAALELYVTQGAVSQQVRMLEERLGVILFKRLPRGLEMT) constitute an HTH lysR-type domain. The H-T-H motif DNA-binding region spans 22–41 (FTKAALELYVTQGAVSQQVR).

This sequence belongs to the LysR transcriptional regulatory family.

Functionally, positive regulator of the expression of the gene (blaB) for beta-lactamase. This Proteus vulgaris protein is HTH-type transcriptional regulator BlaA (blaA).